The chain runs to 173 residues: Large ribosomal subunit protein bL12m (173 aa).

Residues 1-33 constitute a mitochondrion transit peptide; sequence MFRIASRQTRNLRALSSSKNWARSLVNTRSFRA.

The protein belongs to the bacterial ribosomal protein bL12 family. As to quaternary structure, component of the mitochondrial large ribosomal subunit (mt-LSU). Mature yeast 74S mitochondrial ribosomes consist of a small (37S) and a large (54S) subunit. The 37S small subunit contains a 15S ribosomal RNA (15S mt-rRNA) and at least 32 different proteins. The 54S large subunit contains a 21S rRNA (21S mt-rRNA) and at least 45 different proteins.

The protein resides in the mitochondrion. Functionally, component of the mitochondrial ribosome (mitoribosome), a dedicated translation machinery responsible for the synthesis of mitochondrial genome-encoded proteins, including at least some of the essential transmembrane subunits of the mitochondrial respiratory chain. The mitoribosomes are attached to the mitochondrial inner membrane and translation products are cotranslationally integrated into the membrane. The chain is Large ribosomal subunit protein bL12m (mrpl12) from Schizosaccharomyces pombe (strain 972 / ATCC 24843) (Fission yeast).